The chain runs to 399 residues: Small ribosomal subunit protein uS3m (399 aa).

Belongs to the universal ribosomal protein uS3 family.

It is found in the mitochondrion. Its function is as follows. Essential for mitochondrial protein synthesis and required for the maturation of small ribosomal subunits. The chain is Small ribosomal subunit protein uS3m from Penicillium urticae.